Here is a 265-residue protein sequence, read N- to C-terminus: Protein N-terminal and lysine N-methyltransferase EFM7 (265 aa).

S-adenosyl-L-methionine contacts are provided by residues Trp55, 81–83 (GAA), Asp103, Trp141, and Ala169.

It belongs to the class I-like SAM-binding methyltransferase superfamily. EFM7 family.

Its subcellular location is the cytoplasm. In terms of biological role, S-adenosyl-L-methionine-dependent protein methyltransferase that trimethylates the N-terminal glycine 'Gly-2' of elongation factor 1-alpha, before also catalyzing the mono- and dimethylation of 'Lys-3'. The chain is Protein N-terminal and lysine N-methyltransferase EFM7 from Gibberella zeae (strain ATCC MYA-4620 / CBS 123657 / FGSC 9075 / NRRL 31084 / PH-1) (Wheat head blight fungus).